The sequence spans 961 residues: DNA repair endonuclease XPF (961 aa).

Disordered regions lie at residues 1-27, 451-485, and 674-693; these read MADSCAENAAKGTENERPKEVEASADT, NYAKESQTRSAPPKNVSSNKELRREEVSGSQPPLA, and PTDENAKSRQAGGQAPQATK. A compositionally biased stretch (basic and acidic residues) spans 13-22; sequence TENERPKEVE. Residues 458-469 show a composition bias toward polar residues; that stretch reads TRSAPPKNVSSN. One can recognise an ERCC4 domain in the interval 697–777; that stretch reads KVIVDMREFR…KPILLIEFDQ (81 aa).

This sequence belongs to the XPF family. In terms of assembly, heterodimer. Interacts with hdm.

The protein resides in the nucleus. In terms of biological role, implicated in recombination events during meiosis, mostly in meiotic exchange. May directly resolve Holliday junctions within recombination intermediates leading to DNA exchange. Also required for the repair of mismatches within meiotic heteroduplex DNA and for nucleotide excision repair. The chain is DNA repair endonuclease XPF (mei-9) from Drosophila melanogaster (Fruit fly).